The chain runs to 273 residues: Putative pyruvate, phosphate dikinase regulatory protein (273 aa).

Gly-149–Thr-156 is an ADP binding site.

The protein belongs to the pyruvate, phosphate/water dikinase regulatory protein family. PDRP subfamily.

The enzyme catalyses N(tele)-phospho-L-histidyl/L-threonyl-[pyruvate, phosphate dikinase] + ADP = N(tele)-phospho-L-histidyl/O-phospho-L-threonyl-[pyruvate, phosphate dikinase] + AMP + H(+). It catalyses the reaction N(tele)-phospho-L-histidyl/O-phospho-L-threonyl-[pyruvate, phosphate dikinase] + phosphate + H(+) = N(tele)-phospho-L-histidyl/L-threonyl-[pyruvate, phosphate dikinase] + diphosphate. Functionally, bifunctional serine/threonine kinase and phosphorylase involved in the regulation of the pyruvate, phosphate dikinase (PPDK) by catalyzing its phosphorylation/dephosphorylation. The polypeptide is Putative pyruvate, phosphate dikinase regulatory protein (Rickettsia canadensis (strain McKiel)).